The primary structure comprises 85 residues: Small ribosomal subunit protein bS16c (85 aa).

Belongs to the bacterial ribosomal protein bS16 family.

The protein resides in the plastid. It localises to the chloroplast. In Agrostis stolonifera (Creeping bentgrass), this protein is Small ribosomal subunit protein bS16c.